The following is a 2208-amino-acid chain: Glutamate synthase 1 [NADH], chloroplastic (2208 aa).

The N-terminal 49 residues, 1 to 49 (MSAASSSSVLHLRTNQQLLSLRSLKNSTSVASQLAVTSGVSRRRSCTAR), are a transit peptide targeting the chloroplast. Cys117 acts as the Nucleophile in catalysis. The Glutamine amidotransferase type-2 domain occupies 117–521 (CGVGFVAELS…PGMMLLVDFE (405 aa)). Residues 1040–1067 (GKSNTGEGGELPSRMEPLADGSRNPKRS) form a disordered region. 1211-1268 (LAETHQTLVANDLRGRTVLQTDGQLKTGRDVAVAALLGAEEFGFSTAPLITLGCIMMR) is an FMN binding site. Cys1264, Cys1270, and Cys1275 together coordinate [3Fe-4S] cluster. 1995–2009 (GGGDTGTDCIGTSIR) provides a ligand contact to NAD(+).

Belongs to the glutamate synthase family. Monomer. [3Fe-4S] cluster is required as a cofactor. FAD serves as cofactor. Requires FMN as cofactor. Highly expressed in roots and at low levels in leaves.

Its subcellular location is the plastid. It is found in the chloroplast. The catalysed reaction is 2 L-glutamate + NAD(+) = L-glutamine + 2-oxoglutarate + NADH + H(+). Its pathway is amino-acid biosynthesis; L-glutamate biosynthesis via GLT pathway; L-glutamate from 2-oxoglutarate and L-glutamine (NAD(+) route): step 1/1. It participates in energy metabolism; nitrogen metabolism. In terms of biological role, involved in glutamate biosynthesis. Required for non-photorespiratory ammonium assimilation. Probably involved in primary ammonium assimilation in roots. This is Glutamate synthase 1 [NADH], chloroplastic (GLT1) from Arabidopsis thaliana (Mouse-ear cress).